Here is a 70-residue protein sequence, read N- to C-terminus: Venom antimicrobial peptide-6 (70 aa).

Residues 1 to 23 (MKSQTFFLLFLVVFLLAITQSEA) form the signal peptide. Residue F36 is modified to Phenylalanine amide. Residues 40-70 (SLRDMDTMKYLYDPSLSAADLKTLQKLMENY) constitute a propeptide that is removed on maturation.

This sequence belongs to the non-disulfide-bridged peptide (NDBP) superfamily. Short antimicrobial peptide (group 4) family. As to expression, expressed by the venom gland.

It localises to the secreted. The protein resides in the target cell membrane. In terms of biological role, amphipathic peptide that exhibits extensive cytolytic activities against both prokaryotic and eukaryotic cells. Is more potent against Gram-positive bacteria (lethal concentration (LC)=0.25-2.9 uM) than against Gram-negative bacteria (LC=6.2-&gt;50 uM), and fungi ((LC)=14.1-&gt;50 uM). Shows hemolytic activity against rabbit erythrocytes (37.7% of inhibition at 6.25 uM) and cytolysis against rat dorsal root ganglions. In vivo, intravenous injection into mice tail provokes uncomfortable symptoms with a death rate of 12.5%. The chain is Venom antimicrobial peptide-6 from Mesobuthus eupeus (Lesser Asian scorpion).